The primary structure comprises 188 residues: dCTP deaminase (188 aa).

DCTP-binding positions include Lys111 to Arg116, Thr135 to Glu137, Gln156, Tyr170, and Gln180. Glu137 functions as the Proton donor/acceptor in the catalytic mechanism.

This sequence belongs to the dCTP deaminase family. As to quaternary structure, homotrimer.

It carries out the reaction dCTP + H2O + H(+) = dUTP + NH4(+). The protein operates within pyrimidine metabolism; dUMP biosynthesis; dUMP from dCTP (dUTP route): step 1/2. Catalyzes the deamination of dCTP to dUTP. The protein is dCTP deaminase of Francisella philomiragia subsp. philomiragia (strain ATCC 25017 / CCUG 19701 / FSC 153 / O#319-036).